Reading from the N-terminus, the 519-residue chain is Arabinose import ATP-binding protein AraG 2 (519 aa).

2 ABC transporter domains span residues 29–264 (LSLD…MVGR) and 264–515 (RSIE…LIKL). Position 61 to 68 (61 to 68 (GENGAGKS)) interacts with ATP.

Belongs to the ABC transporter superfamily. Arabinose importer (TC 3.A.1.2.2) family. The complex is composed of two ATP-binding proteins (AraG), two transmembrane proteins (AraH) and a solute-binding protein (AraF).

It is found in the cell inner membrane. The enzyme catalyses L-arabinose(out) + ATP + H2O = L-arabinose(in) + ADP + phosphate + H(+). In terms of biological role, part of the ABC transporter complex AraFGH involved in arabinose import. Responsible for energy coupling to the transport system. The sequence is that of Arabinose import ATP-binding protein AraG 2 from Burkholderia ambifaria (strain ATCC BAA-244 / DSM 16087 / CCUG 44356 / LMG 19182 / AMMD) (Burkholderia cepacia (strain AMMD)).